The chain runs to 237 residues: 2,3-bisphosphoglycerate-dependent phosphoglycerate mutase (237 aa).

Residues 8-15, 21-22, Arg-60, 87-90, Lys-98, 114-115, and 180-181 each bind substrate; these read RHGQSQWN, TG, ERHY, RR, and GN. His-9 serves as the catalytic Tele-phosphohistidine intermediate. Glu-87 acts as the Proton donor/acceptor in catalysis.

Belongs to the phosphoglycerate mutase family. BPG-dependent PGAM subfamily. Homodimer.

The enzyme catalyses (2R)-2-phosphoglycerate = (2R)-3-phosphoglycerate. It functions in the pathway carbohydrate degradation; glycolysis; pyruvate from D-glyceraldehyde 3-phosphate: step 3/5. Functionally, catalyzes the interconversion of 2-phosphoglycerate and 3-phosphoglycerate. The polypeptide is 2,3-bisphosphoglycerate-dependent phosphoglycerate mutase (Caulobacter sp. (strain K31)).